We begin with the raw amino-acid sequence, 305 residues long: THAP domain-containing protein 11 (305 aa).

Residues 1 to 80 (MPGFTCCVPG…TYTVRVPTIF (80 aa)) form a THAP-type zinc finger. The segment at 85 to 135 (VNERKVARRPAGAAAARRRQQQQQQQQQQQQQQQLQQQQPSPSSSTAQTTQ) is disordered. Residues 105–135 (QQQQQQQQQQQQQQLQQQQPSPSSSTAQTTQ) are compositionally biased toward low complexity. The short motif at 234–237 (DHSY) is the HCFC1-binding motif (HBM) element. A coiled-coil region spans residues 246–296 (EELLRKLNEQRDILALMEVKMKEMKGSIRHLRLTEAKLREELREKDRLLAM).

Belongs to the THAP11 family. In terms of assembly, forms homodimers. Interacts via HBM with HCFC1. Forms a complex with HCFC1 and ZNF143. As to expression, mainly expressed in embryonic pluripotent cells. In adult tissues, expressed in oocytes and in certain regions of the brain,including hippocampus, olfactory bulb and Purkinje cells.

Its subcellular location is the nucleus. The protein resides in the cytoplasm. Its function is as follows. Transcriptional repressor that plays a central role for embryogenesis and the pluripotency of embryonic stem (ES) cells. Sequence-specific DNA-binding factor that represses gene expression in pluripotent ES cells by directly binding to key genetic loci and recruiting epigenetic modifiers. Required for normal brain development and neural precursor differentiation. In terms of biological role, transcription factor, which has both transcriptional activation and repression activities. Also modulates chromatin accessibility. In complex with HCFC1 and ZNF143, regulates the expression of several genes, including AP2S1, ESCO2, OPHN1, RBL1, UBXN8 and ZNF32. May regulate the expression of genes that encode both cytoplasmic and mitochondrial ribosomal proteins. Required for normal mitochondrial development and function. Regulates mitochondrial gene expression, including that of components of the electron transport chain. Involved in the maintainance of pluripotency in early embryonic cells, possibly through its action on mitochondrial maturation which is required to meet high energy demands of these cells. Required for early development of retina, preventing premature exit of retinal progenitor cells from the cell cycle. This effect may also be mediated by its action on mitochondria. Through the regulation of MMACHC gene expression, controls cobalamin metabolism. Required for normal brain development and neural precursor differentiation. Involved in cell growth. The protein is THAP domain-containing protein 11 (Thap11) of Mus musculus (Mouse).